We begin with the raw amino-acid sequence, 232 residues long: Large ribosomal subunit protein uL1 (232 aa).

This sequence belongs to the universal ribosomal protein uL1 family. As to quaternary structure, part of the 50S ribosomal subunit.

In terms of biological role, binds directly to 23S rRNA. The L1 stalk is quite mobile in the ribosome, and is involved in E site tRNA release. Functionally, protein L1 is also a translational repressor protein, it controls the translation of the L11 operon by binding to its mRNA. This chain is Large ribosomal subunit protein uL1, found in Burkholderia mallei (strain NCTC 10247).